Here is a 122-residue protein sequence, read N- to C-terminus: Glycine cleavage system H protein (122 aa).

The region spanning 19–101 (MVTVGVTHYA…ETEGWLWKMT (83 aa)) is the Lipoyl-binding domain. Position 60 is an N6-lipoyllysine (Lys60).

This sequence belongs to the GcvH family. As to quaternary structure, the glycine cleavage system is composed of four proteins: P, T, L and H. Requires (R)-lipoate as cofactor.

Its function is as follows. The glycine cleavage system catalyzes the degradation of glycine. The H protein shuttles the methylamine group of glycine from the P protein to the T protein. In Bartonella tribocorum (strain CIP 105476 / IBS 506), this protein is Glycine cleavage system H protein.